Here is a 35-residue protein sequence, read N- to C-terminus: 3-hydroxyisobutyrate dehydrogenase (35 aa).

Residue 4–33 (TPVGFIGLGNMGNPMAKNLMKHGYPLIIYD) coordinates NAD(+). An N6-acetyllysine; alternate modification is found at K24. Position 24 is an N6-succinyllysine; alternate (K24).

It belongs to the HIBADH-related family. 3-hydroxyisobutyrate dehydrogenase subfamily. Homodimer.

The protein resides in the mitochondrion. It catalyses the reaction 3-hydroxy-2-methylpropanoate + NAD(+) = 2-methyl-3-oxopropanoate + NADH + H(+). The protein operates within amino-acid degradation; L-valine degradation. This is 3-hydroxyisobutyrate dehydrogenase (HIBADH) from Oryctolagus cuniculus (Rabbit).